Reading from the N-terminus, the 349-residue chain is tRNA pseudouridine synthase D (349 aa).

Phenylalanine 27 contributes to the substrate binding site. Aspartate 80 serves as the catalytic Nucleophile. Asparagine 129 serves as a coordination point for substrate. Positions 155-303 (GVPNYFGAQR…VEASRRAMLL (149 aa)) constitute a TRUD domain. Residue phenylalanine 329 participates in substrate binding.

Belongs to the pseudouridine synthase TruD family.

The enzyme catalyses uridine(13) in tRNA = pseudouridine(13) in tRNA. Functionally, responsible for synthesis of pseudouridine from uracil-13 in transfer RNAs. The chain is tRNA pseudouridine synthase D from Salmonella dublin (strain CT_02021853).